The sequence spans 156 residues: Small ribosomal subunit protein uS7 (156 aa).

This sequence belongs to the universal ribosomal protein uS7 family. Part of the 30S ribosomal subunit. Contacts proteins S9 and S11.

Functionally, one of the primary rRNA binding proteins, it binds directly to 16S rRNA where it nucleates assembly of the head domain of the 30S subunit. Is located at the subunit interface close to the decoding center, probably blocks exit of the E-site tRNA. This is Small ribosomal subunit protein uS7 from Beutenbergia cavernae (strain ATCC BAA-8 / DSM 12333 / CCUG 43141 / JCM 11478 / NBRC 16432 / NCIMB 13614 / HKI 0122).